The chain runs to 439 residues: Cysteine--tRNA ligase (439 aa).

Position 28 (Cys-28) interacts with Zn(2+). The 'HIGH' region motif lies at 30-40; the sequence is ITVYDLCHIGH. Zn(2+) contacts are provided by Cys-209, His-234, and Glu-238. Positions 266-270 match the 'KMSKS' region motif; the sequence is KMSKS. ATP is bound at residue Lys-269.

Belongs to the class-I aminoacyl-tRNA synthetase family. In terms of assembly, monomer. Requires Zn(2+) as cofactor.

It is found in the cytoplasm. It carries out the reaction tRNA(Cys) + L-cysteine + ATP = L-cysteinyl-tRNA(Cys) + AMP + diphosphate. The chain is Cysteine--tRNA ligase from Shigella boydii serotype 4 (strain Sb227).